A 131-amino-acid polypeptide reads, in one-letter code: Heat shock protein 15 homolog (131 aa).

Positions 6 to 67 constitute an S4 RNA-binding domain; the sequence is VRLDKWLWAA…NEEKEIKIIA (62 aa). The tract at residues 98–131 is disordered; the sequence is ARKNNSLSMPHPDRRPNKKERRDLLKFKHQDKFE. Basic and acidic residues predominate over residues 108–131; it reads HPDRRPNKKERRDLLKFKHQDKFE.

It belongs to the HSP15 family.

Its function is as follows. Involved in the recycling of free 50S ribosomal subunits that still carry a nascent chain. Binds RNA more specifically than DNA. Binds with very high affinity to the free 50S ribosomal subunit. Does not bind it when it is part of the 70S ribosome. The polypeptide is Heat shock protein 15 homolog (hslR) (Haemophilus influenzae (strain ATCC 51907 / DSM 11121 / KW20 / Rd)).